A 692-amino-acid polypeptide reads, in one-letter code: Protein hook (692 aa).

In terms of domain architecture, Calponin-homology (CH) spans 6 to 123; that stretch reads SEMYYSLLEW…RLLQLVLGCA (118 aa). Positions 135–576 form a coiled coil; that stretch reads EIMGLEEELQ…YQSKVIQLET (442 aa). A disordered region spans residues 161-180; the sequence is AGERSPSSSASGGAGSGGAV.

The protein belongs to the hook family. As to quaternary structure, homodimer. Interacts with microtubules via its N-terminus.

The protein resides in the cytoplasm. It is found in the cytoskeleton. The protein localises to the endosome. It localises to the synapse. In terms of biological role, involved in endocytic trafficking by stabilizing organelles of the endocytic pathway. Probably acts as a cytoskeletal linker protein required to tether endosome vesicles to the cytoskeleton. Involved in modulation of endocytosis at stages required for down-regulation of membrane proteins that control synapse size. Not involved in synaptic vesicle recycling. Required in R7 cells for boss endocytosis into multivesicular bodies (MVBs). Has a role in regulating adult longevity. This Drosophila willistoni (Fruit fly) protein is Protein hook.